The primary structure comprises 226 residues: Protein FATTY ACID EXPORT 1, chloroplastic (226 aa).

The transit peptide at 1 to 39 (MASQISQLACFSSTNRQFHFQSRSFPCPMIRPQSFVVKS) directs the protein to the chloroplast. Residues 66–87 (SKPYSTVDETATNKESITEPVE) form a disordered region. Residues 67–80 (KPYSTVDETATNKE) show a composition bias toward polar residues. 3 consecutive transmembrane segments (helical) span residues 130–150 (LSTGVLYGGGLLALSTLSLKI), 158–178 (FPYILGQAVLSAVVFWKNFTA), and 186–206 (FPAGVFAVISACMLCFYSYVV).

Belongs to the TMEM14 family. As to expression, expressed in cotyledons, leaves, sepals and pollen.

The protein resides in the plastid. It is found in the chloroplast inner membrane. Mediates the export of free fatty acid from the plastids. Potentially prefers palmitic acid (C16:0) over oleic acid (C18:1) and stearic acid (C18:0). Not involved in fatty acid activation. Required for biogenesis of the outer pollen cell wall, in particular for the assembly of exine and pollen coat and for the release of ketone wax components. This chain is Protein FATTY ACID EXPORT 1, chloroplastic, found in Arabidopsis thaliana (Mouse-ear cress).